Here is an 83-residue protein sequence, read N- to C-terminus: U1-theraphotoxin-Hs1f (83 aa).

A signal peptide spans 1–21 (MKVTLIAILTCAAVLVLHTTA). Residues 22-48 (AEELEESQLMEVGMPDTELAAVDEERL) constitute a propeptide that is removed on maturation. 3 disulfides stabilise this stretch: C51-C64, C55-C75, and C69-C80.

Belongs to the neurotoxin 12 (Hwtx-2) family. 02 (Hwtx-2) subfamily. Expressed by the venom gland.

The protein resides in the secreted. Lethal neurotoxin that blocks neuromuscular transmission. This Cyriopagopus schmidti (Chinese bird spider) protein is U1-theraphotoxin-Hs1f.